The primary structure comprises 171 residues: MAIPKKLRLFTLYVDGTNHIGKIPSVTLPKVTRKTEDYQGGGMQGAVAVDLGLDGGALDASMVVGGVVEELILKYGGDIDEMRLRFVGEIYSGGTSSLMEVEMRGRITEIDPGEAKQGDDTNHTYAIKNTYYKLSVDDKALLEIDLLNFIYKRDGKNLYPDRIVSALGLGG.

It localises to the virion. Forms the virus tail tube. This Serratia marcescens (Serratia marcescens bacteriophage KSP20) protein is Major tail tube protein.